The following is a 668-amino-acid chain: DNA ligase (668 aa).

Residues D37 to D41, S86 to M87, and E116 contribute to the NAD(+) site. K118 functions as the N6-AMP-lysine intermediate in the catalytic mechanism. 4 residues coordinate NAD(+): R139, E173, K288, and K312. 4 residues coordinate Zn(2+): C406, C409, C424, and C429. Residues A591–E668 form the BRCT domain.

The protein belongs to the NAD-dependent DNA ligase family. LigA subfamily. Requires Mg(2+) as cofactor. Mn(2+) serves as cofactor.

The catalysed reaction is NAD(+) + (deoxyribonucleotide)n-3'-hydroxyl + 5'-phospho-(deoxyribonucleotide)m = (deoxyribonucleotide)n+m + AMP + beta-nicotinamide D-nucleotide.. Functionally, DNA ligase that catalyzes the formation of phosphodiester linkages between 5'-phosphoryl and 3'-hydroxyl groups in double-stranded DNA using NAD as a coenzyme and as the energy source for the reaction. It is essential for DNA replication and repair of damaged DNA. The polypeptide is DNA ligase (Lactobacillus helveticus (strain DPC 4571)).